The chain runs to 256 residues: Ubiquinone/menaquinone biosynthesis C-methyltransferase UbiE (256 aa).

Residues Thr-78 and Asp-99 each coordinate S-adenosyl-L-methionine.

Belongs to the class I-like SAM-binding methyltransferase superfamily. MenG/UbiE family.

It carries out the reaction a 2-demethylmenaquinol + S-adenosyl-L-methionine = a menaquinol + S-adenosyl-L-homocysteine + H(+). The enzyme catalyses a 2-methoxy-6-(all-trans-polyprenyl)benzene-1,4-diol + S-adenosyl-L-methionine = a 5-methoxy-2-methyl-3-(all-trans-polyprenyl)benzene-1,4-diol + S-adenosyl-L-homocysteine + H(+). It participates in quinol/quinone metabolism; menaquinone biosynthesis; menaquinol from 1,4-dihydroxy-2-naphthoate: step 2/2. The protein operates within cofactor biosynthesis; ubiquinone biosynthesis. Methyltransferase required for the conversion of demethylmenaquinol (DMKH2) to menaquinol (MKH2) and the conversion of 2-polyprenyl-6-methoxy-1,4-benzoquinol (DDMQH2) to 2-polyprenyl-3-methyl-6-methoxy-1,4-benzoquinol (DMQH2). The polypeptide is Ubiquinone/menaquinone biosynthesis C-methyltransferase UbiE (Geobacter sulfurreducens (strain ATCC 51573 / DSM 12127 / PCA)).